The following is a 251-amino-acid chain: 4-hydroxy-tetrahydrodipicolinate reductase (251 aa).

Residues 8 to 13, 76 to 78, and 106 to 109 each bind NAD(+); these read GAKGRM, GTT, and APNF. H136 acts as the Proton donor/acceptor in catalysis. Residue H137 participates in (S)-2,3,4,5-tetrahydrodipicolinate binding. Residue K140 is the Proton donor of the active site. 146-147 provides a ligand contact to (S)-2,3,4,5-tetrahydrodipicolinate; it reads GT.

This sequence belongs to the DapB family.

The protein resides in the cytoplasm. The enzyme catalyses (S)-2,3,4,5-tetrahydrodipicolinate + NAD(+) + H2O = (2S,4S)-4-hydroxy-2,3,4,5-tetrahydrodipicolinate + NADH + H(+). The catalysed reaction is (S)-2,3,4,5-tetrahydrodipicolinate + NADP(+) + H2O = (2S,4S)-4-hydroxy-2,3,4,5-tetrahydrodipicolinate + NADPH + H(+). It functions in the pathway amino-acid biosynthesis; L-lysine biosynthesis via DAP pathway; (S)-tetrahydrodipicolinate from L-aspartate: step 4/4. Functionally, catalyzes the conversion of 4-hydroxy-tetrahydrodipicolinate (HTPA) to tetrahydrodipicolinate. This Bifidobacterium longum (strain NCC 2705) protein is 4-hydroxy-tetrahydrodipicolinate reductase.